A 713-amino-acid chain; its full sequence is Pro-neuregulin-3, membrane-bound isoform (713 aa).

The Extracellular portion of the chain corresponds to 1 to 362; it reads MSEGAAGASP…MESEDVYQRQ (362 aa). Disordered regions lie at residues 28-48, 119-220, and 251-282; these read AAAAAAAGGGPDGGGEGAAEP, SSFP…STQA, and AAASSSSPSSTSSTTTTPETSTSPKFHTTTYS. The span at 34–44 shows a compositional bias: gly residues; the sequence is AGGGPDGGGEG. A compositionally biased stretch (low complexity) spans 127-148; sequence TTTTTTSTTSPATPSAGGAASS. Polar residues predominate over residues 149-163; it reads RTPNRISTRLTTITR. Low complexity-rich tracts occupy residues 195–207 and 254–274; these read STTAPFFSSSTPG and SSSSPSSTSSTTTTPETSTSP. The EGF-like domain maps to 288-331; it reads HFKPCRDKDLAYCLNDGECFVIETLTGSHKHCRCKEGYQGVRCD. 3 cysteine pairs are disulfide-bonded: Cys-292-Cys-306, Cys-300-Cys-319, and Cys-321-Cys-330. A helical membrane pass occupies residues 363 to 383; sequence VLSISCIIFGIVIVGMFCAAF. The Cytoplasmic segment spans residues 384–713; that stretch reads YFKSKKQAKQ…EIQRDSVLTK (330 aa). The segment at 449–496 is disordered; that stretch reads SAPQSFPEVTSPDRGSQPIKHHSPGQRSGMLHRNTFRRAPPSPRSRLG.

The protein belongs to the neuregulin family. As to quaternary structure, interacts with ERBB4. Proteolytic cleavage close to the plasma membrane on the external face leads to the release of the soluble growth factor form. In terms of processing, extensive glycosylation precedes the proteolytic cleavage. As to expression, expressed in sympathetic, motor, and sensory neurons.

The protein localises to the cell membrane. It localises to the secreted. In terms of biological role, direct ligand for the ERBB4 tyrosine kinase receptor. Binding results in ligand-stimulated tyrosine phosphorylation and activation of the receptor. Does not bind to the EGF receptor, ERBB2 or ERBB3 receptors. This Mus musculus (Mouse) protein is Pro-neuregulin-3, membrane-bound isoform (Nrg3).